Consider the following 139-residue polypeptide: Self-incompatibility protein S1 (139 aa).

An N-terminal signal peptide occupies residues 1–19; the sequence is MNIFYVIVLLSFFLSKSSG. Asn-51 carries N-linked (GlcNAc...) asparagine glycosylation.

Belongs to the plant self-incompatibility (S1) protein family. Post-translationally, glycosylated (S1b) and unglocosylated (S1a) forms coexist. Accumulates in the stigma (at protein level).

It localises to the secreted. In terms of biological role, exhibits specific pollen self-inhibitory activity thus preventing self-fertilization. This Papaver rhoeas (Common poppy) protein is Self-incompatibility protein S1.